Reading from the N-terminus, the 485-residue chain is MSIWNSLSLSTRYSELPPLLFTHVPPQPLNNVHWIMWNEKLAKRFNLPLDPAADAELLSGFSGEVVPPQFSPLAMKYAGHQFGSYNPDLGDGRGLLLAEIKDKAGASFDIHLKGAGRTPYSRSGDGRAVLRSTIREYLCSEAMFGLGIPTTRALGMMGSDTPVYREGYETGALLLRVAETHVRFGHFEHLFYSNLLAEHKLLADKVIEWHFPDCLDNENPYAVMFNEIVDRTAKMIAHWQAVGFAHGVMNTDNMSIIGQTFDYGPFGFLDDYEPGYICNHSDYQGRYAFNQQPRIGLWNLSALAHALSPLIDKADLDQALEQYEVQLHGYFSQLMRQKLGLITKQDGDSRLFESMFELLSQNSVDYTRFLRELSNVDTHNEQAIIDLFIDRDAAKLWVSLYITRCEKEHETVASRCKKMREVNPKYILRNYLAQQAIDKAQEGDYSELEALSLLLRSPFDEHIEFEHYANLPPSWGKKMEISCSS.

Residues G90, G92, R93, K113, D125, G126, R176, and R183 each coordinate ATP. D252 acts as the Proton acceptor in catalysis. Positions 253 and 262 each coordinate Mg(2+). Position 262 (D262) interacts with ATP.

The protein belongs to the SELO family. Requires Mg(2+) as cofactor. It depends on Mn(2+) as a cofactor.

The enzyme catalyses L-seryl-[protein] + ATP = 3-O-(5'-adenylyl)-L-seryl-[protein] + diphosphate. The catalysed reaction is L-threonyl-[protein] + ATP = 3-O-(5'-adenylyl)-L-threonyl-[protein] + diphosphate. It catalyses the reaction L-tyrosyl-[protein] + ATP = O-(5'-adenylyl)-L-tyrosyl-[protein] + diphosphate. It carries out the reaction L-histidyl-[protein] + UTP = N(tele)-(5'-uridylyl)-L-histidyl-[protein] + diphosphate. The enzyme catalyses L-seryl-[protein] + UTP = O-(5'-uridylyl)-L-seryl-[protein] + diphosphate. The catalysed reaction is L-tyrosyl-[protein] + UTP = O-(5'-uridylyl)-L-tyrosyl-[protein] + diphosphate. In terms of biological role, nucleotidyltransferase involved in the post-translational modification of proteins. It can catalyze the addition of adenosine monophosphate (AMP) or uridine monophosphate (UMP) to a protein, resulting in modifications known as AMPylation and UMPylation. The sequence is that of Protein nucleotidyltransferase YdiU from Aliivibrio salmonicida (strain LFI1238) (Vibrio salmonicida (strain LFI1238)).